Consider the following 354-residue polypeptide: Holliday junction branch migration complex subunit RuvB (354 aa).

A large ATPase domain (RuvB-L) region spans residues M1–Y183. Residues R23, G64, K67, T68, S69, E130–F132, R173, Y183, and R220 each bind ATP. Position 68 (T68) interacts with Mg(2+). The small ATPAse domain (RuvB-S) stretch occupies residues S184–D254. The head domain (RuvB-H) stretch occupies residues A257 to P354. Positions 312 and 317 each coordinate DNA.

The protein belongs to the RuvB family. In terms of assembly, homohexamer. Forms an RuvA(8)-RuvB(12)-Holliday junction (HJ) complex. HJ DNA is sandwiched between 2 RuvA tetramers; dsDNA enters through RuvA and exits via RuvB. An RuvB hexamer assembles on each DNA strand where it exits the tetramer. Each RuvB hexamer is contacted by two RuvA subunits (via domain III) on 2 adjacent RuvB subunits; this complex drives branch migration. In the full resolvosome a probable DNA-RuvA(4)-RuvB(12)-RuvC(2) complex forms which resolves the HJ.

The protein resides in the cytoplasm. It carries out the reaction ATP + H2O = ADP + phosphate + H(+). Its function is as follows. The RuvA-RuvB-RuvC complex processes Holliday junction (HJ) DNA during genetic recombination and DNA repair, while the RuvA-RuvB complex plays an important role in the rescue of blocked DNA replication forks via replication fork reversal (RFR). RuvA specifically binds to HJ cruciform DNA, conferring on it an open structure. The RuvB hexamer acts as an ATP-dependent pump, pulling dsDNA into and through the RuvAB complex. RuvB forms 2 homohexamers on either side of HJ DNA bound by 1 or 2 RuvA tetramers; 4 subunits per hexamer contact DNA at a time. Coordinated motions by a converter formed by DNA-disengaged RuvB subunits stimulates ATP hydrolysis and nucleotide exchange. Immobilization of the converter enables RuvB to convert the ATP-contained energy into a lever motion, pulling 2 nucleotides of DNA out of the RuvA tetramer per ATP hydrolyzed, thus driving DNA branch migration. The RuvB motors rotate together with the DNA substrate, which together with the progressing nucleotide cycle form the mechanistic basis for DNA recombination by continuous HJ branch migration. Branch migration allows RuvC to scan DNA until it finds its consensus sequence, where it cleaves and resolves cruciform DNA. This is Holliday junction branch migration complex subunit RuvB from Salinispora tropica (strain ATCC BAA-916 / DSM 44818 / JCM 13857 / NBRC 105044 / CNB-440).